The primary structure comprises 393 residues: BEN domain-containing protein 5 (393 aa).

The stretch at 169–212 forms a coiled coil; that stretch reads RVLYEELLRSYQQQQQEMKHIQHELERTRKQLVQQAKKLKDYGS. The region spanning 274–380 is the BEN domain; it reads GSGVWVNEEK…EKIMDINKSC (107 aa).

May act as a transcriptional repressor. This chain is BEN domain-containing protein 5 (bend5), found in Xenopus laevis (African clawed frog).